The chain runs to 526 residues: Na(+)/H(+) antiporter NhaB (526 aa).

13 consecutive transmembrane segments (helical) span residues 14–34, 35–55, 99–119, 122–142, 146–166, 206–226, 239–259, 307–327, 328–348, 357–377, 397–417, 451–471, and 479–499; these read FLGY…LINP, LLFY…EFIF, MLLV…LFVF, LLLR…AAAF, FLDA…FYGI, LMMH…VGEP, FVDF…CGIL, AVIG…VGLI, GLSV…HAIG, FTAL…QQLF, YLFN…SVYI, ATPN…APLI, and VIMA…CVEF.

This sequence belongs to the NhaB Na(+)/H(+) (TC 2.A.34) antiporter family.

It is found in the cell inner membrane. It catalyses the reaction 2 Na(+)(in) + 3 H(+)(out) = 2 Na(+)(out) + 3 H(+)(in). Functionally, na(+)/H(+) antiporter that extrudes sodium in exchange for external protons. This is Na(+)/H(+) antiporter NhaB from Pectobacterium atrosepticum (strain SCRI 1043 / ATCC BAA-672) (Erwinia carotovora subsp. atroseptica).